The primary structure comprises 59 residues: UPF0391 membrane protein AZC_4184 (59 aa).

The next 2 membrane-spanning stretches (helical) occupy residues 4–24 (WALT…TAVA) and 30–50 (IAKI…VMGF).

Belongs to the UPF0391 family.

Its subcellular location is the cell membrane. This chain is UPF0391 membrane protein AZC_4184, found in Azorhizobium caulinodans (strain ATCC 43989 / DSM 5975 / JCM 20966 / LMG 6465 / NBRC 14845 / NCIMB 13405 / ORS 571).